Here is an 865-residue protein sequence, read N- to C-terminus: DNA topoisomerase 1 (865 aa).

The region spanning 3-142 is the Toprim domain; it reads KALVIVESPA…RYSRVVFNEI (140 aa). A Mg(2+)-binding site is contributed by E9. Residues 37-65 are disordered; sequence LPTSGSAAKKSADSTSTKTAKKPKKDERG. Residues 39–54 are compositionally biased toward low complexity; it reads TSGSAAKKSADSTSTK. D111 serves as a coordination point for Mg(2+). The Topo IA-type catalytic domain occupies 158 to 575; the sequence is NINRVNAQQA…NFFSDFTQQL (418 aa). Residues 192–197 are interaction with DNA; it reads SAGRVQ. Catalysis depends on Y319, which acts as the O-(5'-phospho-DNA)-tyrosine intermediate. 3 C4-type zinc fingers span residues 599–630, 662–689, and 711–736; these read CPTC…KERC, CQKC…NPTC, and CEKC…NDEC.

It belongs to the type IA topoisomerase family. In terms of assembly, monomer. It depends on Mg(2+) as a cofactor.

It carries out the reaction ATP-independent breakage of single-stranded DNA, followed by passage and rejoining.. In terms of biological role, releases the supercoiling and torsional tension of DNA, which is introduced during the DNA replication and transcription, by transiently cleaving and rejoining one strand of the DNA duplex. Introduces a single-strand break via transesterification at a target site in duplex DNA. The scissile phosphodiester is attacked by the catalytic tyrosine of the enzyme, resulting in the formation of a DNA-(5'-phosphotyrosyl)-enzyme intermediate and the expulsion of a 3'-OH DNA strand. The free DNA strand then undergoes passage around the unbroken strand, thus removing DNA supercoils. Finally, in the religation step, the DNA 3'-OH attacks the covalent intermediate to expel the active-site tyrosine and restore the DNA phosphodiester backbone. The protein is DNA topoisomerase 1 of Salmonella typhimurium (strain LT2 / SGSC1412 / ATCC 700720).